Consider the following 323-residue polypeptide: Cysteine synthase A (323 aa).

Residues asparagine 8 and arginine 35 each contribute to the hydrogen sulfide site. N6-(pyridoxal phosphate)lysine is present on lysine 42. Residues asparagine 72 and 177 to 181 (GTGGT) each bind pyridoxal 5'-phosphate. A hydrogen sulfide-binding site is contributed by leucine 269. Serine 273 serves as a coordination point for pyridoxal 5'-phosphate.

This sequence belongs to the cysteine synthase/cystathionine beta-synthase family. Homodimer. The cofactor is pyridoxal 5'-phosphate.

The enzyme catalyses O-acetyl-L-serine + hydrogen sulfide = L-cysteine + acetate. Its pathway is amino-acid biosynthesis; L-cysteine biosynthesis; L-cysteine from L-serine: step 2/2. Its function is as follows. Two cysteine synthase enzymes are found. Both catalyze the same reaction. Cysteine synthase B can also use thiosulfate in place of sulfide to give cysteine thiosulfonate as a product. This chain is Cysteine synthase A (cysK), found in Salmonella typhi.